The following is a 767-amino-acid chain: Probable beta-D-xylosidase 7 (767 aa).

The first 19 residues, 1–19 (MAKQLLLLLLLFIVHGVES), serve as a signal peptide directing secretion. N100 carries N-linked (GlcNAc...) asparagine glycosylation. D292 is a catalytic residue. A glycan (N-linked (GlcNAc...) asparagine) is linked at N643.

Belongs to the glycosyl hydrolase 3 family.

The protein localises to the secreted. It is found in the extracellular space. Its subcellular location is the extracellular matrix. The chain is Probable beta-D-xylosidase 7 (BXL7) from Arabidopsis thaliana (Mouse-ear cress).